A 204-amino-acid polypeptide reads, in one-letter code: Putative AgrB-like protein (204 aa).

5 consecutive transmembrane segments (helical) span residues 51-73, 87-107, 111-131, 151-168, and 173-190; these read VYGI…SYLW, LNCT…FQNI, NWIV…FAPA, AMIG…IPFA, and LIMV…PLTY.

The protein belongs to the AgrB family.

The protein localises to the cell membrane. May be involved in the proteolytic processing of a quorum sensing system signal molecule precursor. The sequence is that of Putative AgrB-like protein from Listeria innocua serovar 6a (strain ATCC BAA-680 / CLIP 11262).